Reading from the N-terminus, the 349-residue chain is Aspartate carbamoyltransferase catalytic subunit (349 aa).

The carbamoyl phosphate site is built by Arg-59 and Thr-60. L-aspartate is bound at residue Lys-87. Carbamoyl phosphate-binding residues include Arg-109, His-142, and Gln-145. Positions 182 and 253 each coordinate L-aspartate. Carbamoyl phosphate contacts are provided by Gly-294 and Pro-295.

The protein belongs to the aspartate/ornithine carbamoyltransferase superfamily. ATCase family. Heterododecamer (2C3:3R2) of six catalytic PyrB chains organized as two trimers (C3), and six regulatory PyrI chains organized as three dimers (R2).

The enzyme catalyses carbamoyl phosphate + L-aspartate = N-carbamoyl-L-aspartate + phosphate + H(+). Its pathway is pyrimidine metabolism; UMP biosynthesis via de novo pathway; (S)-dihydroorotate from bicarbonate: step 2/3. In terms of biological role, catalyzes the condensation of carbamoyl phosphate and aspartate to form carbamoyl aspartate and inorganic phosphate, the committed step in the de novo pyrimidine nucleotide biosynthesis pathway. The chain is Aspartate carbamoyltransferase catalytic subunit from Synechococcus sp. (strain CC9311).